Here is a 477-residue protein sequence, read N- to C-terminus: Ribulose bisphosphate carboxylase large chain (477 aa).

Positions 1 to 2 (MS) are excised as a propeptide. Pro3 is modified (N-acetylproline). Lys14 bears the N6,N6,N6-trimethyllysine mark. Residues Asn123 and Thr173 each coordinate substrate. Lys175 acts as the Proton acceptor in catalysis. Substrate is bound at residue Lys177. Residues Lys201, Asp203, and Glu204 each coordinate Mg(2+). The residue at position 201 (Lys201) is an N6-carboxylysine. The active-site Proton acceptor is the His294. Substrate contacts are provided by Arg295, His327, and Ser379.

The protein belongs to the RuBisCO large chain family. Type I subfamily. As to quaternary structure, heterohexadecamer of 8 large chains and 8 small chains; disulfide-linked. The disulfide link is formed within the large subunit homodimers. Requires Mg(2+) as cofactor. The disulfide bond which can form in the large chain dimeric partners within the hexadecamer appears to be associated with oxidative stress and protein turnover.

The protein resides in the plastid. The protein localises to the chloroplast. The enzyme catalyses 2 (2R)-3-phosphoglycerate + 2 H(+) = D-ribulose 1,5-bisphosphate + CO2 + H2O. It catalyses the reaction D-ribulose 1,5-bisphosphate + O2 = 2-phosphoglycolate + (2R)-3-phosphoglycerate + 2 H(+). RuBisCO catalyzes two reactions: the carboxylation of D-ribulose 1,5-bisphosphate, the primary event in carbon dioxide fixation, as well as the oxidative fragmentation of the pentose substrate in the photorespiration process. Both reactions occur simultaneously and in competition at the same active site. The polypeptide is Ribulose bisphosphate carboxylase large chain (Oryza nivara (Indian wild rice)).